Reading from the N-terminus, the 71-residue chain is Protein PSY3 (71 aa).

Positions methionine 1–alanine 25 are cleaved as a signal peptide. Positions arginine 26 to asparagine 49 are excised as a propeptide. The disordered stretch occupies residues serine 47–arginine 71. Tyrosine 51 bears the Sulfotyrosine mark. The residue at position 63 (proline 63) is a 4-hydroxyproline. An O-linked (Ara...) hydroxyproline glycan is attached at proline 63. The propeptide occupies glycine 66–arginine 71.

It belongs to the sulfated-peptide plant hormone family. The sulfation and the glycosylation are required for full activity.

The protein localises to the secreted. Promotes cellular proliferation and expansion. This Arabidopsis thaliana (Mouse-ear cress) protein is Protein PSY3 (PSY3).